Here is a 563-residue protein sequence, read N- to C-terminus: Arginine--tRNA ligase (563 aa).

The 'HIGH' region signature appears at 121 to 131 (PNIAKPFSIGH).

Belongs to the class-I aminoacyl-tRNA synthetase family. Monomer.

The protein resides in the cytoplasm. It carries out the reaction tRNA(Arg) + L-arginine + ATP = L-arginyl-tRNA(Arg) + AMP + diphosphate. This Streptococcus thermophilus (strain CNRZ 1066) protein is Arginine--tRNA ligase.